The chain runs to 332 residues: Transcription factor HBP-1b(c38) (332 aa).

The tract at residues 1–48 (MAEASPRTETSTDDTDENLMLEPGNAALAVVSDSSDRSRDKNGDQKTM) is disordered. Over residues 34–47 (SSDRSRDKNGDQKT) the composition is skewed to basic and acidic residues. Positions 44 to 107 (DQKTMRRLAQ…SSADQSHSMS (64 aa)) constitute a bZIP domain. The basic motif stretch occupies residues 46 to 66 (KTMRRLAQNREAARKSRLRKK). Residues 47–142 (TMRRLAQNRE…RAAVNAHAGD (96 aa)) are a coiled coil. Residues 72–86 (LENSRLKLTQLEQEL) form a leucine-zipper region. A DOG1 domain is found at 111–329 (ALAFDTEYAR…RALSSLWLAR (219 aa)).

Belongs to the bZIP family. As to quaternary structure, binds DNA as a dimer.

It is found in the nucleus. Its function is as follows. Transcriptional activator that binds specifically to the DNA sequence 5'-TGACG-3'. Recognizes ocs elements like the as-1 motif of the cauliflower mosaic virus 35S promoter. Binding to the as-1-like cis elements mediate auxin- and salicylic acid-inducible transcription. Binds to the hexamer motif 5'-ACGTCA-3' of histone gene promoters. This Triticum aestivum (Wheat) protein is Transcription factor HBP-1b(c38).